The sequence spans 228 residues: Thermonuclease (228 aa).

The N-terminal stretch at 1–23 (MTEYLLSAGICMAIVSILLIGMA) is a signal peptide. Positions 24-60 (ISNVSKEQYAKRFFFFATSCLVLTLVVASSLSSSANA) are excised as a propeptide. Asp-100 contacts Ca(2+). The active site involves Arg-114. Positions 119 and 120 each coordinate Ca(2+). Catalysis depends on residues Glu-122 and Arg-166.

This sequence belongs to the thermonuclease family. It depends on Ca(2+) as a cofactor.

Its subcellular location is the secreted. It catalyses the reaction Endonucleolytic cleavage to nucleoside 3'-phosphates and 3'-phosphooligonucleotide end-products.. Its function is as follows. Enzyme that catalyzes the hydrolysis of both DNA and RNA at the 5' position of the phosphodiester bond. The chain is Thermonuclease (nuc) from Staphylococcus aureus (strain MRSA252).